The following is a 212-amino-acid chain: Adenylate kinase (212 aa).

Residue 10–15 (GAGKGT) participates in ATP binding. The interval 30–59 (AIGDIFRTIIKTSTSEAELINNYVKQGELI) is NMP. AMP is bound by residues R36, 57–59 (ELI), 85–88 (GYPR), and Q92. The interval 122-160 (GRYSCKNCGKIYNRYFVQPKTDNVCDVCGSSTFDYRKDD) is LID. R123 provides a ligand contact to ATP. Zn(2+) contacts are provided by C126 and C129. 132-133 (IY) is a binding site for ATP. C146 and C149 together coordinate Zn(2+). AMP is bound by residues R157 and R168. K196 lines the ATP pocket.

Belongs to the adenylate kinase family. Monomer.

The protein localises to the cytoplasm. It catalyses the reaction AMP + ATP = 2 ADP. The protein operates within purine metabolism; AMP biosynthesis via salvage pathway; AMP from ADP: step 1/1. Catalyzes the reversible transfer of the terminal phosphate group between ATP and AMP. Plays an important role in cellular energy homeostasis and in adenine nucleotide metabolism. The polypeptide is Adenylate kinase (Rickettsia conorii (strain ATCC VR-613 / Malish 7)).